The sequence spans 715 residues: Protein sneaky (715 aa).

The Cytoplasmic portion of the chain corresponds to 1-32 (MLSLLTRPFLPIFCFLYGPQSEGSTRIQCLRR). A helical membrane pass occupies residues 33-53 (FVTFLLGLVLGFLLWKLAALN). Residues 54-66 (FTLGRLFVNGATD) are Extracellular-facing. The helical transmembrane segment at 67 to 87 (LYVFIIFVLVTGTIFMLSLPV) threads the bilayer. Residues 88–109 (RAVILLIFVALVGKSGRTYLRA) lie on the Cytoplasmic side of the membrane. The helical transmembrane segment at 110 to 130 (VAFAFIISGPIANLVENAGEV) threads the bilayer. At 131 to 373 (ARVFVCTTVL…FERQKRIFNK (243 aa)) the chain is on the extracellular side. The helical transmembrane segment at 374–394 (VMGILQKILCLFMLRMVYVSI) threads the bilayer. The Cytoplasmic portion of the chain corresponds to 395–457 (NYYVKYLNDV…FSRTHHESTT (63 aa)). A helical transmembrane segment spans residues 458 to 478 (VCFNLLQFLLELVTAGLFILI). At 479 to 553 (DHLVVELLQI…NAHVLPKKMY (75 aa)) the chain is on the extracellular side. The helical transmembrane segment at 554–574 (YQLILLYLIIIVLIYQSTTFL) threads the bilayer. Topologically, residues 575-715 (RMRRVICSFF…VEVYTYRKEK (141 aa)) are cytoplasmic. Residues 655–691 (CMICRGLEDSTFTVCGNCGLPYCDDCAEDLNSVCFQC) form an RING-type; degenerate zinc finger.

Specifically expressed in testis.

It localises to the cytoplasmic vesicle. The protein localises to the secretory vesicle. Its subcellular location is the acrosome membrane. The protein resides in the cytoplasm. It is found in the cytoplasmic vesicle membrane. Component of the sperm acrosome membrane. Required for breakdown of the sperm plasma membrane after sperm entry into the egg, which is an essential prerequisite for successful fertilization. In Drosophila melanogaster (Fruit fly), this protein is Protein sneaky.